Reading from the N-terminus, the 539-residue chain is 2,3-dihydroxybenzoate-AMP ligase (539 aa).

Residue G191 participates in ATP binding. Residues 234–235 (HN) and S240 each bind substrate. Positions 307, 329, 413, 428, and 519 each coordinate ATP. Position 519 (K519) interacts with substrate.

Belongs to the ATP-dependent AMP-binding enzyme family.

The protein localises to the cytoplasm. The catalysed reaction is 2,3-dihydroxybenzoate + holo-[ACP] + ATP = 2,3-dihydroxybenzoyl-[ACP] + AMP + diphosphate. It functions in the pathway siderophore biosynthesis; bacillibactin biosynthesis. Functionally, involved in the biosynthesis of the catecholic siderophore bacillibactin. Catalyzes the activation of the carboxylate group of 2,3-dihydroxy-benzoate (DHB), via ATP-dependent PPi exchange reactions, to the acyladenylate. The sequence is that of 2,3-dihydroxybenzoate-AMP ligase from Bacillus subtilis (strain 168).